We begin with the raw amino-acid sequence, 86 residues long: Small ribosomal subunit protein uS17 (86 aa).

The protein belongs to the universal ribosomal protein uS17 family. Part of the 30S ribosomal subunit.

In terms of biological role, one of the primary rRNA binding proteins, it binds specifically to the 5'-end of 16S ribosomal RNA. This is Small ribosomal subunit protein uS17 from Streptococcus thermophilus (strain CNRZ 1066).